The primary structure comprises 133 residues: Single-stranded DNA-binding protein 2 (133 aa).

The SSB domain occupies 1-103 (MNKTILIGRL…VVAEEVKFLE (103 aa)).

Homotetramer.

This is Single-stranded DNA-binding protein 2 (ssb2) from Clostridium acetobutylicum (strain ATCC 824 / DSM 792 / JCM 1419 / IAM 19013 / LMG 5710 / NBRC 13948 / NRRL B-527 / VKM B-1787 / 2291 / W).